A 504-amino-acid polypeptide reads, in one-letter code: ATP synthase subunit alpha, chloroplastic (504 aa).

170 to 177 serves as a coordination point for ATP; that stretch reads GDRQTGKT.

Belongs to the ATPase alpha/beta chains family. In terms of assembly, F-type ATPases have 2 components, CF(1) - the catalytic core - and CF(0) - the membrane proton channel. CF(1) has five subunits: alpha(3), beta(3), gamma(1), delta(1), epsilon(1). CF(0) has four main subunits: a, b, b' and c.

Its subcellular location is the plastid. It localises to the chloroplast thylakoid membrane. It carries out the reaction ATP + H2O + 4 H(+)(in) = ADP + phosphate + 5 H(+)(out). Its function is as follows. Produces ATP from ADP in the presence of a proton gradient across the membrane. The alpha chain is a regulatory subunit. The protein is ATP synthase subunit alpha, chloroplastic of Porphyra purpurea (Red seaweed).